The chain runs to 122 residues: Acidic phospholipase A2 A' (122 aa).

Disulfide bonds link Cys-26–Cys-115, Cys-28–Cys-44, Cys-43–Cys-95, Cys-49–Cys-122, Cys-50–Cys-88, Cys-57–Cys-81, and Cys-75–Cys-86. Ca(2+) contacts are provided by Tyr-27, Gly-29, and Gly-31. His-47 is a catalytic residue. Residue Asp-48 participates in Ca(2+) binding. Asp-89 is an active-site residue.

The protein belongs to the phospholipase A2 family. Group II subfamily. D49 sub-subfamily. The cofactor is Ca(2+). Expressed by the venom gland.

Its subcellular location is the secreted. It carries out the reaction a 1,2-diacyl-sn-glycero-3-phosphocholine + H2O = a 1-acyl-sn-glycero-3-phosphocholine + a fatty acid + H(+). In terms of biological role, PLA2 catalyzes the calcium-dependent hydrolysis of the 2-acyl groups in 3-sn-phosphoglycerides. The sequence is that of Acidic phospholipase A2 A' from Gloydius halys (Chinese water mocassin).